A 350-amino-acid polypeptide reads, in one-letter code: uncharacterized protein (350 aa).

Residues Asp214, Asp225, His289, Glu318, and Glu332 each coordinate Mn(2+).

This sequence belongs to the peptidase M24B family. The cofactor is Mn(2+).

This is an uncharacterized protein from Staphylococcus saprophyticus subsp. saprophyticus (strain ATCC 15305 / DSM 20229 / NCIMB 8711 / NCTC 7292 / S-41).